Here is a 254-residue protein sequence, read N- to C-terminus: 3-deoxy-manno-octulosonate cytidylyltransferase (254 aa).

Belongs to the KdsB family.

Its subcellular location is the cytoplasm. It carries out the reaction 3-deoxy-alpha-D-manno-oct-2-ulosonate + CTP = CMP-3-deoxy-beta-D-manno-octulosonate + diphosphate. Its pathway is nucleotide-sugar biosynthesis; CMP-3-deoxy-D-manno-octulosonate biosynthesis; CMP-3-deoxy-D-manno-octulosonate from 3-deoxy-D-manno-octulosonate and CTP: step 1/1. It functions in the pathway bacterial outer membrane biogenesis; lipopolysaccharide biosynthesis. Activates KDO (a required 8-carbon sugar) for incorporation into bacterial lipopolysaccharide in Gram-negative bacteria. The polypeptide is 3-deoxy-manno-octulosonate cytidylyltransferase (Chlamydia abortus (strain DSM 27085 / S26/3) (Chlamydophila abortus)).